Consider the following 1286-residue polypeptide: Structural maintenance of chromosomes protein 4 (1286 aa).

The interval 1-51 (MRRKGTKPSTACHQEEGPPPSQDGAHSDEEMEQPAGEAESAAPAKPPGEEL) is disordered. Phosphoserine occurs at positions 21, 27, and 40. 111-118 (GPNGSGKS) contacts ATP. Residue S141 is modified to Phosphoserine. Residues 270–589 (RRVEILNEHR…KVEEAKSSLA (320 aa)) are a coiled coil. 2 positions are modified to N6-acetyllysine: K379 and K677. Residues 611–725 (PGIYGRLGDL…ANNLDQATRV (115 aa)) form the SMC hinge domain. Coiled coils occupy residues 768–1018 (EISV…KLEQ) and 1068–1133 (ESIT…LNEF). S980 bears the Phosphoserine mark.

The protein belongs to the SMC family. SMC4 subfamily. As to quaternary structure, forms a heterodimer with SMC2. Component of the condensin complex, which contains the SMC2 and SMC4 heterodimer, and three non SMC subunits that probably regulate the complex: BRRN1/CAPH, CNAP1/CAPD2 and CAPG.

It localises to the nucleus. The protein resides in the cytoplasm. It is found in the chromosome. In terms of biological role, central component of the condensin complex, a complex required for conversion of interphase chromatin into mitotic-like condense chromosomes. The condensin complex probably introduces positive supercoils into relaxed DNA in the presence of type I topoisomerases and converts nicked DNA into positive knotted forms in the presence of type II topoisomerases. This is Structural maintenance of chromosomes protein 4 (Smc4) from Mus musculus (Mouse).